We begin with the raw amino-acid sequence, 355 residues long: Protein RecA (355 aa).

Position 72–79 (72–79 (GPESSGKT)) interacts with ATP.

The protein belongs to the RecA family.

It is found in the cytoplasm. Its function is as follows. Can catalyze the hydrolysis of ATP in the presence of single-stranded DNA, the ATP-dependent uptake of single-stranded DNA by duplex DNA, and the ATP-dependent hybridization of homologous single-stranded DNAs. It interacts with LexA causing its activation and leading to its autocatalytic cleavage. In Wolbachia pipientis subsp. Culex pipiens (strain wPip), this protein is Protein RecA.